The following is a 239-amino-acid chain: Large ribosomal subunit protein uL2 (239 aa).

Disordered regions lie at residues 1-20 (MGKS…FRSP) and 203-239 (PFGG…GRRK). Basic residues predominate over residues 222–239 (PPGRKVGHIAARRTGRRK).

Belongs to the universal ribosomal protein uL2 family. In terms of assembly, part of the 50S ribosomal subunit. Forms a bridge to the 30S subunit in the 70S ribosome.

One of the primary rRNA binding proteins. Required for association of the 30S and 50S subunits to form the 70S ribosome, for tRNA binding and peptide bond formation. It has been suggested to have peptidyltransferase activity; this is somewhat controversial. Makes several contacts with the 16S rRNA in the 70S ribosome. This is Large ribosomal subunit protein uL2 from Pyrococcus horikoshii (strain ATCC 700860 / DSM 12428 / JCM 9974 / NBRC 100139 / OT-3).